A 153-amino-acid polypeptide reads, in one-letter code: 6,7-dimethyl-8-ribityllumazine synthase (153 aa).

5-amino-6-(D-ribitylamino)uracil is bound by residues Phe-22, 56–58 (AFE), and 80–82 (TVI). 85 to 86 (ST) lines the (2S)-2-hydroxy-3-oxobutyl phosphate pocket. The Proton donor role is filled by His-88. Residue Phe-113 participates in 5-amino-6-(D-ribitylamino)uracil binding. Residue Arg-127 coordinates (2S)-2-hydroxy-3-oxobutyl phosphate.

This sequence belongs to the DMRL synthase family. As to quaternary structure, forms an icosahedral capsid composed of 60 subunits, arranged as a dodecamer of pentamers.

It catalyses the reaction (2S)-2-hydroxy-3-oxobutyl phosphate + 5-amino-6-(D-ribitylamino)uracil = 6,7-dimethyl-8-(1-D-ribityl)lumazine + phosphate + 2 H2O + H(+). The protein operates within cofactor biosynthesis; riboflavin biosynthesis; riboflavin from 2-hydroxy-3-oxobutyl phosphate and 5-amino-6-(D-ribitylamino)uracil: step 1/2. Functionally, catalyzes the formation of 6,7-dimethyl-8-ribityllumazine by condensation of 5-amino-6-(D-ribitylamino)uracil with 3,4-dihydroxy-2-butanone 4-phosphate. This is the penultimate step in the biosynthesis of riboflavin. The sequence is that of 6,7-dimethyl-8-ribityllumazine synthase from Actinobacillus pleuropneumoniae serotype 7 (strain AP76).